The chain runs to 93 residues: Small ribosomal subunit protein uS17 (93 aa).

This sequence belongs to the universal ribosomal protein uS17 family. In terms of assembly, part of the 30S ribosomal subunit.

Its function is as follows. One of the primary rRNA binding proteins, it binds specifically to the 5'-end of 16S ribosomal RNA. This Bordetella bronchiseptica (strain ATCC BAA-588 / NCTC 13252 / RB50) (Alcaligenes bronchisepticus) protein is Small ribosomal subunit protein uS17.